Reading from the N-terminus, the 245-residue chain is MSGHSKWHNIQAKKGKTDAKRGKIFTKIGKEIVMAVKNGGANQDINAKLRDVVAKAKAANMPNDTISKAIKKASGELSSVNYENIVYEGYGPSGVAVIVETLTDNKNRSAGNVRSAFTKGGGNMGTSGCVSFMFQEKGEIVIEKEDKDEDELMMIALDAGAEDFASEEEVFVVTTAPEEFGTVREALEAQGIEFLEASVKMIPDTYTAIDEADAKKFQKMLDLLDDDDDVQEVYHNAEFPEGWDE.

It belongs to the TACO1 family.

It is found in the cytoplasm. In Clostridium beijerinckii (strain ATCC 51743 / NCIMB 8052) (Clostridium acetobutylicum), this protein is Probable transcriptional regulatory protein Cbei_4222.